Consider the following 418-residue polypeptide: UDP-N-acetylglucosamine 1-carboxyvinyltransferase (418 aa).

22 to 23 (KN) contacts phosphoenolpyruvate. Arg-92 contacts UDP-N-acetyl-alpha-D-glucosamine. Cys-116 serves as the catalytic Proton donor. Cys-116 carries the post-translational modification 2-(S-cysteinyl)pyruvic acid O-phosphothioketal. Residues 121–125 (RPVDQ), Asp-306, and Ile-328 contribute to the UDP-N-acetyl-alpha-D-glucosamine site.

The protein belongs to the EPSP synthase family. MurA subfamily.

It is found in the cytoplasm. The catalysed reaction is phosphoenolpyruvate + UDP-N-acetyl-alpha-D-glucosamine = UDP-N-acetyl-3-O-(1-carboxyvinyl)-alpha-D-glucosamine + phosphate. It participates in cell wall biogenesis; peptidoglycan biosynthesis. In terms of biological role, cell wall formation. Adds enolpyruvyl to UDP-N-acetylglucosamine. In Acinetobacter baylyi (strain ATCC 33305 / BD413 / ADP1), this protein is UDP-N-acetylglucosamine 1-carboxyvinyltransferase.